Here is a 71-residue protein sequence, read N- to C-terminus: Large ribosomal subunit protein bL31 (71 aa).

Zn(2+) contacts are provided by C16, C18, C37, and C40.

Belongs to the bacterial ribosomal protein bL31 family. Type A subfamily. As to quaternary structure, part of the 50S ribosomal subunit. It depends on Zn(2+) as a cofactor.

Functionally, binds the 23S rRNA. In Sodalis glossinidius (strain morsitans), this protein is Large ribosomal subunit protein bL31.